The chain runs to 396 residues: MAKEKFSRTKPHVNVGTIGHVDHGKTTLTAAIATVLAAKFGGEAKAYDQIDAAPEEKARGITINTAHVEYETAARHYAHVDCPGHADYVKNMITGAAQMDGAILVCSAADGPMPQTREHILLARQVGVPYIIVFLNKCDMVDDAELLELVEMEVRELLDKYDFPGDDTPIIHGSAKLALEGDKGPLGEEAIMKLADALDNYIPLPERAVDGAFLMPVEDVFSISGRGTVVTGRIERGIIKVGEEIEIVGIADTQKTICTGVEMFRKLLDQGQAGDNVGILLRGTKREDVQRGQVLCKPGSIKPHTHFTGEIYVLSKDEGGRHTPFFNNYRPQFYFRTTDVTGAIELPEGKEMVMPGDNVSITVKLINPIAMEEGLRFAIREGGRTVGAGVVAKILA.

In terms of domain architecture, tr-type G spans 10–206 (KPHVNVGTIG…ALDNYIPLPE (197 aa)). The tract at residues 19–26 (GHVDHGKT) is G1. 19–26 (GHVDHGKT) serves as a coordination point for GTP. Residue T26 participates in Mg(2+) binding. The G2 stretch occupies residues 60 to 64 (GITIN). The tract at residues 81 to 84 (DCPG) is G3. GTP contacts are provided by residues 81–85 (DCPGH) and 136–139 (NKCD). The G4 stretch occupies residues 136-139 (NKCD). The G5 stretch occupies residues 174–176 (SAK).

It belongs to the TRAFAC class translation factor GTPase superfamily. Classic translation factor GTPase family. EF-Tu/EF-1A subfamily. In terms of assembly, monomer.

The protein resides in the cytoplasm. The enzyme catalyses GTP + H2O = GDP + phosphate + H(+). In terms of biological role, GTP hydrolase that promotes the GTP-dependent binding of aminoacyl-tRNA to the A-site of ribosomes during protein biosynthesis. The sequence is that of Elongation factor Tu from Polaromonas naphthalenivorans (strain CJ2).